A 51-amino-acid chain; its full sequence is Insulin (51 aa).

Cystine bridges form between Cys-7–Cys-37, Cys-19–Cys-50, and Cys-36–Cys-41.

The protein belongs to the insulin family. Heterodimer of a B chain and an A chain linked by two disulfide bonds.

The protein resides in the secreted. Insulin decreases blood glucose concentration. It increases cell permeability to monosaccharides, amino acids and fatty acids. It accelerates glycolysis, the pentose phosphate cycle, and glycogen synthesis in liver. The polypeptide is Insulin (INS) (Anser anser anser (Western greylag goose)).